The chain runs to 220 residues: Deoxyribose-phosphate aldolase (220 aa).

Asp-89 (proton donor/acceptor) is an active-site residue. Lys-151 functions as the Schiff-base intermediate with acetaldehyde in the catalytic mechanism. The Proton donor/acceptor role is filled by Lys-180.

This sequence belongs to the DeoC/FbaB aldolase family. DeoC type 1 subfamily.

It is found in the cytoplasm. It catalyses the reaction 2-deoxy-D-ribose 5-phosphate = D-glyceraldehyde 3-phosphate + acetaldehyde. It participates in carbohydrate degradation; 2-deoxy-D-ribose 1-phosphate degradation; D-glyceraldehyde 3-phosphate and acetaldehyde from 2-deoxy-alpha-D-ribose 1-phosphate: step 2/2. Its function is as follows. Catalyzes a reversible aldol reaction between acetaldehyde and D-glyceraldehyde 3-phosphate to generate 2-deoxy-D-ribose 5-phosphate. The chain is Deoxyribose-phosphate aldolase from Deinococcus radiodurans (strain ATCC 13939 / DSM 20539 / JCM 16871 / CCUG 27074 / LMG 4051 / NBRC 15346 / NCIMB 9279 / VKM B-1422 / R1).